The following is a 1083-amino-acid chain: Voltage-gated inwardly rectifying potassium channel KCNH3 (1083 aa).

Residues 1–228 are Cytoplasmic-facing; that stretch reads MPAMRGLLAP…HCGALRATWD (228 aa). The PAS domain occupies 18–90; it reads IATRFDGTHS…QQIRKALDEH (73 aa). The 53-residue stretch at 93–145 folds into the PAC domain; it reads FKAELILYRKSGLPFWCLLDVIPIKNEKGEVALFLVSHKDISETKNRGGPDRW. The segment covering 137 to 150 has biased composition (basic and acidic residues); the sequence is KNRGGPDRWKETGG. Residues 137 to 157 are disordered; that stretch reads KNRGGPDRWKETGGGRRRYGR. Residues 229 to 249 form a helical membrane-spanning segment; sequence GFILLATLYVAVTVPYSVCVS. Over 250–259 the chain is Extracellular; the sequence is TAREPSAARG. A helical transmembrane segment spans residues 260-280; that stretch reads PPSVCDLAVEVLFILDIVLNF. Residues 281 to 302 are Cytoplasmic-facing; that stretch reads RTTFVSKSGQVVFAPKSICLHY. The chain crosses the membrane as a helical span at residues 303 to 323; sequence VTTWFLLDVIAALPFDLLHAF. The Extracellular segment spans residues 324 to 331; that stretch reads KVNVYFGA. The chain crosses the membrane as a helical; Voltage-sensor span at residues 332 to 352; it reads HLLKTVRLLRLLRLLPRLDRY. At 353-361 the chain is on the cytoplasmic side; that stretch reads SQYSAVVLT. Residues 362–382 traverse the membrane as a helical segment; the sequence is LLMAVFALLAHWVACVWFYIG. The Extracellular portion of the chain corresponds to 383–453; that stretch reads QREIESSESE…GGPSLRSAYI (71 aa). 3 N-linked (GlcNAc...) asparagine glycosylation sites follow: Asn421, Asn428, and Asn436. Positions 454-474 form an intramembrane region, pore-forming; the sequence is TSLYFALSSLTSVGFGNVSAN. The short motif at 465–470 is the Selectivity filter element; sequence SVGFGN. Topologically, residues 475-479 are extracellular; the sequence is TDTEK. The chain crosses the membrane as a helical span at residues 480–500; sequence IFSICTMLIGALMHAVVFGNV. Residues 501–1083 lie on the Cytoplasmic side of the membrane; it reads TAIIQRMYAR…QWTQEEGTGV (583 aa). A nucleoside 3',5'-cyclic phosphate is bound at residue 582–697; the sequence is LFEAASRGCL…FAPRFSRGLR (116 aa). 3 disordered regions span residues 729 to 810, 832 to 873, and 972 to 1055; these read EEKE…LRLP, CGSD…SEAR, and MAPW…ALPW. The span at 773 to 785 shows a compositional bias: basic residues; the sequence is TAPRPRLGGRGRP. The segment covering 844–861 has biased composition (low complexity); sequence GQSGPECSSSPSPGPESG.

It belongs to the potassium channel family. H (Eag) (TC 1.A.1.20) subfamily. Kv12.2/KCNH3 sub-subfamily. As to quaternary structure, the potassium channel is probably composed of a homo- or heterotetrameric complex of pore-forming alpha subunits that can associate with modulating beta subunits. Interacts with KCNE1 and KCNE3; these interactions regulate KCNH3 trafficking to the plasma membrane and its subsequent voltage-gated potassium channel activity. Post-translationally, N-glycosylated. N-glycosylation mediates traffick to the cell membrane but is not necessary for voltage-gated potassium channel activity. In terms of tissue distribution, detected only in brain, in particular in the telencephalon. Detected in the cerebral cortex, occipital pole, frontal and temporal lobe, putamen, amygdala, hippocampus and caudate nucleus.

The protein resides in the cell membrane. The catalysed reaction is K(+)(in) = K(+)(out). In terms of biological role, pore-forming (alpha) subunit of a voltage-gated inwardly rectifying potassium channel. Charactherized by a fast rate of activation during depolarization followed by a rapid inactivation at much more depolarized value causing inward rectification due to a C-type inactivation mechanism. Exhibits a rapid recovery from inactivation. The chain is Voltage-gated inwardly rectifying potassium channel KCNH3 from Homo sapiens (Human).